We begin with the raw amino-acid sequence, 1020 residues long: Probable leucine-rich repeat receptor-like serine/threonine-protein kinase At3g14840 (1020 aa).

Residues 1-26 (MSLNRQLLFTYYFIVSLILFSDFVSS) form the signal peptide. Topologically, residues 27–614 (ATLPKEEVDA…GTGGGSSVGT (588 aa)) are extracellular. N-linked (GlcNAc...) asparagine glycans are attached at residues Asn-50 and Asn-81. LRR repeat units lie at residues 86 to 110 (ICHV…LSGL), 111 to 134 (PFLQ…WGAS), 136 to 157 (LLNI…LGNL), 158 to 181 (TTLS…LGNL), 182 to 204 (PNLK…TFAK), 206 to 231 (TTLT…NWKG), 253 to 276 (LGTL…PLRN), 277 to 301 (MTSM…LGQN), 302 to 324 (RKLK…TYSG), and 326 to 349 (SDVD…MVDQ). 3 N-linked (GlcNAc...) asparagine glycosylation sites follow: Asn-124, Asn-138, and Asn-156. The N-linked (GlcNAc...) asparagine glycan is linked to Asn-193. N-linked (GlcNAc...) asparagine glycosylation is found at Asn-276 and Asn-289. 7 N-linked (GlcNAc...) asparagine glycosylation sites follow: Asn-359, Asn-386, Asn-389, Asn-417, Asn-461, Asn-469, and Asn-498. One copy of the LRR 11 repeat lies at 479 to 501 (QARLSAISLTYQALCLGKGNYTV). A helical membrane pass occupies residues 615 to 635 (VVGSVIASTVFLVLLIGGILW). The Cytoplasmic segment spans residues 636 to 1020 (WRGCLRPKSQ…LDSAYWNTRT (385 aa)). Residues 672–949 (FDPANKIGEG…VSMLEGHSTV (278 aa)) enclose the Protein kinase domain. ATP is bound by residues 678 to 686 (IGEGGFGPV) and Lys-700. A Phosphotyrosine modification is found at Tyr-745. Asp-798 functions as the Proton acceptor in the catalytic mechanism. Ser-831 carries the phosphoserine modification. 2 positions are modified to phosphothreonine: Thr-832 and Thr-837. Tyr-845 carries the post-translational modification Phosphotyrosine.

Belongs to the protein kinase superfamily. Ser/Thr protein kinase family.

Its subcellular location is the cell membrane. It carries out the reaction L-seryl-[protein] + ATP = O-phospho-L-seryl-[protein] + ADP + H(+). The enzyme catalyses L-threonyl-[protein] + ATP = O-phospho-L-threonyl-[protein] + ADP + H(+). In Arabidopsis thaliana (Mouse-ear cress), this protein is Probable leucine-rich repeat receptor-like serine/threonine-protein kinase At3g14840 (LRR-RLK).